We begin with the raw amino-acid sequence, 615 residues long: MPAYRSRTTTHGRNMAGARGLWRATGMKDSDFGKPIIAVVNSFTQFVPGHVHLKDLGQMVAREIEAAGGVAKEFNTIAVDDGIAMGHDGMLYSLPSRDLIADSVEYMVNAHCADAMVCISNCDKITPGMLMAAMRINIPVVFVSGGPMEAGKVILKGKEHALDLVDAMVAAADESFTDEEVTAIERSACPTCGSCSGMFTANSMNCLTEALGLSLPGNGSTLATHADRQRLFLEAGRLVVDLCKRYYEQDDESVLPRSIATFEAFENAMSLDIAMGGSTNTVLHLLAAAHEAGVNFTMSDIDHLSRKVPCLSKVAPAKSDVHMEDVHRAGGIYAILGELDRAGLLHTHLPTVHSRTLGDALNQWDVKRTNSPTVQEFFRAAPGGVPTQVAFSQDRRWKELDLDRETGVIRSAEHAFSKDGGLAVLFGNIAREGCIVKTAGVDDSILKFTGPAKVYESQDAAVTAILTGQVTSGDVVVIRYEGPKGGPGMQEMLYPTSYLKSKGLGAACALLTDGRFSGGTSGLSIGHVSPEAAEGGEIGLVENGDVIEIDIPNRTIHLAVADDVLAQRRAEQEAKGWKPVKERPRKVSTALRAYAAMTTSAARGAVRDLSQLKID.

Asp-81 is a Mg(2+) binding site. Cys-122 contributes to the [2Fe-2S] cluster binding site. Asp-123 and Lys-124 together coordinate Mg(2+). At Lys-124 the chain carries N6-carboxylysine. Residue Cys-195 coordinates [2Fe-2S] cluster. A Mg(2+)-binding site is contributed by Glu-491. The active-site Proton acceptor is Ser-517.

It belongs to the IlvD/Edd family. Homodimer. [2Fe-2S] cluster is required as a cofactor. Mg(2+) serves as cofactor.

The catalysed reaction is (2R)-2,3-dihydroxy-3-methylbutanoate = 3-methyl-2-oxobutanoate + H2O. It catalyses the reaction (2R,3R)-2,3-dihydroxy-3-methylpentanoate = (S)-3-methyl-2-oxopentanoate + H2O. Its pathway is amino-acid biosynthesis; L-isoleucine biosynthesis; L-isoleucine from 2-oxobutanoate: step 3/4. It participates in amino-acid biosynthesis; L-valine biosynthesis; L-valine from pyruvate: step 3/4. In terms of biological role, functions in the biosynthesis of branched-chain amino acids. Catalyzes the dehydration of (2R,3R)-2,3-dihydroxy-3-methylpentanoate (2,3-dihydroxy-3-methylvalerate) into 2-oxo-3-methylpentanoate (2-oxo-3-methylvalerate) and of (2R)-2,3-dihydroxy-3-methylbutanoate (2,3-dihydroxyisovalerate) into 2-oxo-3-methylbutanoate (2-oxoisovalerate), the penultimate precursor to L-isoleucine and L-valine, respectively. The polypeptide is Dihydroxy-acid dehydratase (Novosphingobium aromaticivorans (strain ATCC 700278 / DSM 12444 / CCUG 56034 / CIP 105152 / NBRC 16084 / F199)).